Reading from the N-terminus, the 138-residue chain is Thyrotropin subunit beta (138 aa).

Positions 1-20 (MTATFLMSLLFGLAFGQTMS) are cleaved as a signal peptide. Cystine bridges form between Cys-22–Cys-72, Cys-36–Cys-87, Cys-39–Cys-125, Cys-47–Cys-103, Cys-51–Cys-105, and Cys-108–Cys-115. Asn-43 is a glycosylation site (N-linked (GlcNAc...) asparagine). Positions 133-138 (LVGFPV) are excised as a propeptide.

It belongs to the glycoprotein hormones subunit beta family. Heterodimer of a common alpha chain and a unique beta chain which confers biological specificity to thyrotropin, lutropin, follitropin and gonadotropin.

Its subcellular location is the secreted. In terms of biological role, indispensable for the control of thyroid structure and metabolism. The protein is Thyrotropin subunit beta (TSHB) of Monodelphis domestica (Gray short-tailed opossum).